Consider the following 536-residue polypeptide: CTP synthase (536 aa).

Residues 1-267 (MTKFIFVTGG…DDIVIKRLEL (267 aa)) are amidoligase domain. S13 is a binding site for CTP. S13 lines the UTP pocket. 14 to 19 (SLGKGI) contributes to the ATP binding site. Y54 is an L-glutamine binding site. D71 provides a ligand contact to ATP. Residues D71 and E141 each coordinate Mg(2+). Residues 148 to 150 (DIE), 188 to 193 (KTKPTQ), and K224 contribute to the CTP site. UTP contacts are provided by residues 188 to 193 (KTKPTQ) and K224. Position 240–242 (240–242 (RDA)) interacts with ATP. The Glutamine amidotransferase type-1 domain occupies 293-535 (TIGLVGKYVS…IEASLNHQQS (243 aa)). G355 serves as a coordination point for L-glutamine. The Nucleophile; for glutamine hydrolysis role is filled by C382. Residues 383–386 (LGMQ), E406, and R463 each bind L-glutamine. Active-site residues include H508 and E510.

It belongs to the CTP synthase family. In terms of assembly, homotetramer.

It carries out the reaction UTP + L-glutamine + ATP + H2O = CTP + L-glutamate + ADP + phosphate + 2 H(+). The catalysed reaction is L-glutamine + H2O = L-glutamate + NH4(+). The enzyme catalyses UTP + NH4(+) + ATP = CTP + ADP + phosphate + 2 H(+). The protein operates within pyrimidine metabolism; CTP biosynthesis via de novo pathway; CTP from UDP: step 2/2. With respect to regulation, allosterically activated by GTP, when glutamine is the substrate; GTP has no effect on the reaction when ammonia is the substrate. The allosteric effector GTP functions by stabilizing the protein conformation that binds the tetrahedral intermediate(s) formed during glutamine hydrolysis. Inhibited by the product CTP, via allosteric rather than competitive inhibition. In terms of biological role, catalyzes the ATP-dependent amination of UTP to CTP with either L-glutamine or ammonia as the source of nitrogen. Regulates intracellular CTP levels through interactions with the four ribonucleotide triphosphates. The sequence is that of CTP synthase from Staphylococcus saprophyticus subsp. saprophyticus (strain ATCC 15305 / DSM 20229 / NCIMB 8711 / NCTC 7292 / S-41).